The primary structure comprises 216 residues: Mite allergen Lep d 7 (216 aa).

The N-terminal stretch at 1–19 (MQYLAIAVIVALAGLSAAA) is a signal peptide.

It belongs to the mite group 7 allergen family.

The protein resides in the secreted. The polypeptide is Mite allergen Lep d 7 (Lepidoglyphus destructor (Storage mite)).